Consider the following 1182-residue polypeptide: MEYLLFLLLFAGFLTFLPRFLIYAQITSSTTTTTPVPAANRRTIRVGVAAVQTTELDSIGWPMSGGAINMAIQKLRDDGFIAPFDFEVTVNYTECDRSLGAAVGMEFMRTKRLDVVIGPPCRDPMEIMATMATYYSTPMLGWGLVTDSKFTDTERYPYLTNIMANSLSLGFSLVKLLEMMEWDRVALVYEESAQDYPLSVINDVETAINEYDTFAVNVVVKQALPGGDLNDAQYISVLNRIKLRCRIIVSVFQTAPTRRRYLKMIDQQGMANEEYVHILLGLRSIGFGKQSAGLTKCELNCLSSGLAPFWDIAPDDGLNDRLKQAATRMLVMDLSTDVPDINYLNTFTMNCGAVVVNPPVSCATPACINASTSPPSAFARSLHDVFYLYGLAITNLYNQDPAYLNDIDKINGALQLNFAGLTGEVSINANNSRVPKLMLYALNDKYDQASFMNLTYSLNGGAVSVSLAYTNEASLWYWYGGKRPLSVPVCGFAGTDCPQSFVDQYGALVFAIGGVLIFAMLFVITCFFYVMRQKRLERDRIDAEWQIPLVKLQAPPKRDKERMSKRSLQSGPSNITDTSKMTFDNTFSNYSIFYLDKEPVLSTAHPASNLIRTDYDTFVRLRKLDHENVNKFVGMSIDGPEYLAVWKLCMRGSLQDIIGQGNFSIDPFFMFCVIRDMAEGLKYLHNSFLHVHANLRSGTVLVNESWQAKLTDFGLGTLAEEKKPMKRRQLWMAPEVIRGTLLPHQIEKSADIYSLAVIASEVLTRKEAWNMAERKDTVDEIVYRIKKGGPNAPRPELDMDGVEINHNLLILIRDCWSEEPADRPSADVICNLLKNMMPKKGNLMDHVFNILEDYTTNLEVEVEDRTKELTAEKKKADVLLGRMLPKQVAERLKQGQTVEPEGFDSVTVFFSDVVKFTQLAAKCSPFQVVNLLNDLYSNFDAIIEEHGCYKVESIGDGYLCVSGLPSKNGNAHIKQIVELSLDFMSYCKSFKIPHLPREKVELRIGVNSGPCVAGVVGLSMPRYCLFGDTVNTASRMESNGKASHIHLSAASYTLLMKHYPNQYNTASRGDVIIKGKGVMETFWVFERNNQFMGVSSNSGYQSDKKATNNGSSPESTPPSTPPMHEVKANSPVRHRKPPSPSSPTLSKRSVSPIMEAKARDIHNEETEALYRQFRRQETLALI.

A signal peptide spans 1–24; the sequence is MEYLLFLLLFAGFLTFLPRFLIYA. Residues 25-507 are Extracellular-facing; it reads QITSSTTTTT…PQSFVDQYGA (483 aa). 4 N-linked (GlcNAc...) asparagine glycosylation sites follow: Asn91, Asn369, Asn430, and Asn453. A helical transmembrane segment spans residues 508–528; the sequence is LVFAIGGVLIFAMLFVITCFF. The Cytoplasmic segment spans residues 529–1182; sequence YVMRQKRLER…FRRQETLALI (654 aa). In terms of domain architecture, Protein kinase spans 562 to 849; sequence RMSKRSLQSG…KGNLMDHVFN (288 aa). The 131-residue stretch at 907–1037 folds into the Guanylate cyclase domain; the sequence is TVFFSDVVKF…DTVNTASRME (131 aa). A disordered region spans residues 1094 to 1164; sequence VSSNSGYQSD…EAKARDIHNE (71 aa). A compositionally biased stretch (low complexity) spans 1142–1152; that stretch reads SPTLSKRSVSP.

Belongs to the adenylyl cyclase class-4/guanylyl cyclase family. In terms of tissue distribution, expressed in IL2 sensory neurons.

Its subcellular location is the cell membrane. The enzyme catalyses GTP = 3',5'-cyclic GMP + diphosphate. In terms of biological role, guanylate cyclase involved in the production of the second messenger cGMP. The sequence is that of Receptor-type guanylate cyclase gcy-19 from Caenorhabditis elegans.